The chain runs to 464 residues: Argininosuccinate lyase (464 aa).

This sequence belongs to the lyase 1 family. Argininosuccinate lyase subfamily.

The protein localises to the cytoplasm. The enzyme catalyses 2-(N(omega)-L-arginino)succinate = fumarate + L-arginine. It participates in amino-acid biosynthesis; L-arginine biosynthesis; L-arginine from L-ornithine and carbamoyl phosphate: step 3/3. This chain is Argininosuccinate lyase, found in Pseudomonas fluorescens (strain SBW25).